Consider the following 391-residue polypeptide: Sulfate adenylyltransferase (391 aa).

This sequence belongs to the sulfate adenylyltransferase family.

It carries out the reaction sulfate + ATP + H(+) = adenosine 5'-phosphosulfate + diphosphate. Its pathway is sulfur metabolism; hydrogen sulfide biosynthesis; sulfite from sulfate: step 1/3. The chain is Sulfate adenylyltransferase from Lactiplantibacillus plantarum (strain ATCC BAA-793 / NCIMB 8826 / WCFS1) (Lactobacillus plantarum).